The sequence spans 496 residues: Glutamyl-tRNA(Gln) amidotransferase subunit A (496 aa).

Catalysis depends on charge relay system residues lysine 75 and serine 150. Serine 174 functions as the Acyl-ester intermediate in the catalytic mechanism.

The protein belongs to the amidase family. GatA subfamily. As to quaternary structure, heterotrimer of A, B and C subunits.

The enzyme catalyses L-glutamyl-tRNA(Gln) + L-glutamine + ATP + H2O = L-glutaminyl-tRNA(Gln) + L-glutamate + ADP + phosphate + H(+). Allows the formation of correctly charged Gln-tRNA(Gln) through the transamidation of misacylated Glu-tRNA(Gln) in organisms which lack glutaminyl-tRNA synthetase. The reaction takes place in the presence of glutamine and ATP through an activated gamma-phospho-Glu-tRNA(Gln). The protein is Glutamyl-tRNA(Gln) amidotransferase subunit A of Burkholderia cenocepacia (strain HI2424).